The following is a 524-amino-acid chain: Bifunctional purine biosynthesis protein PurH (524 aa).

Residues 1-145 (MIKQALLSVS…KNHRDVTVIV (145 aa)) form the MGS-like domain.

It belongs to the PurH family.

It catalyses the reaction (6R)-10-formyltetrahydrofolate + 5-amino-1-(5-phospho-beta-D-ribosyl)imidazole-4-carboxamide = 5-formamido-1-(5-phospho-D-ribosyl)imidazole-4-carboxamide + (6S)-5,6,7,8-tetrahydrofolate. The catalysed reaction is IMP + H2O = 5-formamido-1-(5-phospho-D-ribosyl)imidazole-4-carboxamide. It functions in the pathway purine metabolism; IMP biosynthesis via de novo pathway; 5-formamido-1-(5-phospho-D-ribosyl)imidazole-4-carboxamide from 5-amino-1-(5-phospho-D-ribosyl)imidazole-4-carboxamide (10-formyl THF route): step 1/1. It participates in purine metabolism; IMP biosynthesis via de novo pathway; IMP from 5-formamido-1-(5-phospho-D-ribosyl)imidazole-4-carboxamide: step 1/1. The protein is Bifunctional purine biosynthesis protein PurH of Cupriavidus metallidurans (strain ATCC 43123 / DSM 2839 / NBRC 102507 / CH34) (Ralstonia metallidurans).